The primary structure comprises 83 residues: Exodeoxyribonuclease 7 small subunit (83 aa).

This sequence belongs to the XseB family. Heterooligomer composed of large and small subunits.

It localises to the cytoplasm. It catalyses the reaction Exonucleolytic cleavage in either 5'- to 3'- or 3'- to 5'-direction to yield nucleoside 5'-phosphates.. In terms of biological role, bidirectionally degrades single-stranded DNA into large acid-insoluble oligonucleotides, which are then degraded further into small acid-soluble oligonucleotides. The sequence is that of Exodeoxyribonuclease 7 small subunit from Bradyrhizobium sp. (strain BTAi1 / ATCC BAA-1182).